The chain runs to 303 residues: MYIQILGSAAGGGFPQWNCNCVNCAGFRDGSLRAQARTQSSIALSDDGVNWVLCNASPDIRAQLQGFAPMQPGRALRDTGISAIVLMDSQIDHTTGLLSLREGCPHQVWCTDMVHEDLSTGFPLFEMLKHWNGGLNWNRIELQGSFVIPACPNLRFTPFPLRSAAPPYSPHRFDPHPGDNIGLLVEDTRTGGKLFYAPGLGKVDEALAEKMRDADCLLVDGTMWDDDEMQRRGVGTRTGREMGHLAQNGPGGMLDVLEGFPEQRKVLIHINNTNPILDEDSPERAELVRRNVEVAFDGMSIEL.

Belongs to the PqqB family.

It participates in cofactor biosynthesis; pyrroloquinoline quinone biosynthesis. In terms of biological role, may be involved in the transport of PQQ or its precursor to the periplasm. This is Coenzyme PQQ synthesis protein B from Pseudomonas syringae pv. tomato (strain ATCC BAA-871 / DC3000).